The chain runs to 82 residues: Toxin GTx1-15 (82 aa).

The signal sequence occupies residues 1–21; that stretch reads MKTSVVFVIAGLALLSVACYA. A propeptide spanning residues 22–46 is cleaved from the precursor; it reads SELKEQSSINEVLSTIFHFEQPEER. 3 disulfide bridges follow: Cys48–Cys63, Cys55–Cys69, and Cys62–Cys76. At Phe80 the chain carries Phenylalanine amide.

Belongs to the neurotoxin 10 (Hwtx-1) family. 08 (Gtx1-15) subfamily. Expressed by the venom gland.

It is found in the secreted. Its function is as follows. Potent voltage-gated sodium channel blocker. Potently inhibits the voltage-gated sodium channels Nav1.7/SCN9A (IC(50)=0.58-10 nM). Shows a moderate activity on Nav1.1/SCN1A (IC(50)=6 nM), Nav1.2/SCN2A (IC(50)=5-128 nM), Nav1.3/SCN3A (IC(50)=20.3-170 nM), and Nav1.6/SCN8A (IC(50)=17-20.1 nM). Shows an unclear inhibition of Nav1.4/SCN4A (IC(50)=200 nM to &gt;10 uM), Nav1.5/SCN5A (IC(50)=140 nM to &gt;10 uM) and Nav1.8/SCN10A (IC(50)=68-12200 nM). Weakly blocks the low voltage-gated calcium channels Cav3.1/CACNA1G (30% inhibition of the peak current by 9.8 nM of the toxin). It shows moderate affinity for lipid bilayers. The sequence is that of Toxin GTx1-15 from Grammostola rosea (Chilean rose tarantula).